A 195-amino-acid polypeptide reads, in one-letter code: MINRQQGFTLLEVMAALAIFSMLSVLAFMIFSQASELHQRSQKEIQQFNQLQRTITILDNDLLQLVARRNRSTDKIMVLGEEAIFTTQSRDPLAPLSEAQTLLTVHWYLRNHTLYRAVRTSVDGRKDQPAQAMLEHVESFLLESNSGESQELPLSVTLHLQTQQYGGLQRRFALPEQLAREESPAQTQAGNNNHE.

A propeptide spans 1–7 (MINRQQG) (leader sequence). Position 8 is an N-methylphenylalanine (phenylalanine 8). Residues 8-29 (FTLLEVMAALAIFSMLSVLAFM) form a helical membrane-spanning segment.

It belongs to the GSP J family. As to quaternary structure, type II secretion is composed of four main components: the outer membrane complex, the inner membrane complex, the cytoplasmic secretion ATPase and the periplasm-spanning pseudopilus. Interacts with core component GspG. In terms of processing, cleaved by prepilin peptidase. Methylated by prepilin peptidase at the amino group of the N-terminal phenylalanine once the leader sequence is cleaved by prepilin peptidase.

It is found in the cell inner membrane. In terms of biological role, component of the type II secretion system required for the energy-dependent secretion of extracellular factors such as proteases and toxins from the periplasm. Part of the pseudopilus tip complex that is critical for the recognition and binding of secretion substrates. This is Type II secretion system protein J (gspJ) from Escherichia coli (strain K12).